The primary structure comprises 265 residues: MDVQDHTLDQGPQDKDKDLEEEVTVHLTADGDQVVQDPSGEGPFAENIQYQFRTDSNGQSQVTYRVVQVGDNETNPQAVVTTFPQGHQALTQVIQGSFNGESPTSESQGGETRFTYFPASAAIPGDGAGPASGGEQQPGITQPSGAAGGQFYVMMSPQDVLQGASQRTIAPRTHQFNTKIDNSRTVRDERRRATHNEVERRRRDKINNWIVKLSKIIPDCNIDHSKQGQSKGGILTKTCDYIHDLRNSNTRMAKASRIRKGSPST.

Residues 1 to 18 show a composition bias toward basic and acidic residues; that stretch reads MDVQDHTLDQGPQDKDKD. Disordered stretches follow at residues 1-21 and 119-149; these read MDVQ…DLEE and ASAA…AAGG. Polar residues predominate over residues 134–144; that stretch reads GEQQPGITQPS. Positions 190–245 constitute a bHLH domain; sequence RRRATHNEVERRRRDKINNWIVKLSKIIPDCNIDHSKQGQSKGGILTKTCDYIHDL.

Efficient DNA binding requires dimerization with another bHLH protein. Binds DNA as a homodimer or a heterodimer. In terms of tissue distribution, enriched in ectodermal tissue.

Its subcellular location is the nucleus. In terms of biological role, may act as a transcription factor which recognizes the CACGTG motif on SPEC gene promoters. This chain is Upstream stimulatory factor, found in Strongylocentrotus purpuratus (Purple sea urchin).